Here is a 592-residue protein sequence, read N- to C-terminus: MSAAQSPTAQHAHAEDPVVQALFARFGQHVFVAQATHTGMPVLWLDREYLLEVLNFLRDMPEPFEMLFDLHGIDERLRSHREDLPPADFTVFYQLMSISRNRDIMLKVALSERDLEVPSVAGVYPNANWYEREVWDMFGIDFRGHPHLTRLLMPPTWNGHPLRKDYPARATEFDPYTLTVEGQSTEQEALRFDPEAWGMQRQSENTDYMFLNLGPNHPSAHGAFRIALQLDGEVVVDCVPDIGYHHRGAEKMAERQSWHSYIPYTDRIDYTGGVMNNLPYVMAVEKLAGIEVTDRAKTIRVMMAEMFRINSHLLFLGTYLQDLGAMTPVFFTFTDRQKAYEVIEGITGFRMHPAWYRIGGTAHDLPRGWDKLVQGFLDWMPKRLVEYERAMMENAIIRERTKQVAAFTTREALEWGVTGPNLRATGCDFDLRKQRPYSGYENFDFEVPLGANGDVFDRGQLRIDEMRQSLRIIQQCVDHMPAGDYKADHPLTTPPPREKMLQHIETLITHFLQVSWGPVLKPNESLSMIEATKGINSYYLTADGNTMSYRTRIRTPSFPHLQQIPAAVRGALVPDLIAHLGSIDFVMADVDR.

Residues 1-183 are NADH dehydrogenase I subunit C; the sequence is MSAAQSPTAQ…DPYTLTVEGQ (183 aa). The tract at residues 207–592 is NADH dehydrogenase I subunit D; sequence DYMFLNLGPN…IDFVMADVDR (386 aa).

It in the N-terminal section; belongs to the complex I 30 kDa subunit family. The protein in the C-terminal section; belongs to the complex I 49 kDa subunit family. As to quaternary structure, NDH-1 is composed of 13 different subunits. Subunits NuoB, CD, E, F, and G constitute the peripheral sector of the complex.

Its subcellular location is the cell inner membrane. The catalysed reaction is a quinone + NADH + 5 H(+)(in) = a quinol + NAD(+) + 4 H(+)(out). Functionally, NDH-1 shuttles electrons from NADH, via FMN and iron-sulfur (Fe-S) centers, to quinones in the respiratory chain. The immediate electron acceptor for the enzyme in this species is believed to be ubiquinone. Couples the redox reaction to proton translocation (for every two electrons transferred, four hydrogen ions are translocated across the cytoplasmic membrane), and thus conserves the redox energy in a proton gradient. In Chromohalobacter salexigens (strain ATCC BAA-138 / DSM 3043 / CIP 106854 / NCIMB 13768 / 1H11), this protein is NADH-quinone oxidoreductase subunit C/D.